The primary structure comprises 79 residues: uncharacterized protein (79 aa).

The tract at residues 1-27 is disordered; sequence MRQRGQEHLPTSVKSEPRACNNPTVAE.

This is an uncharacterized protein from Homo sapiens (Human).